A 78-amino-acid chain; its full sequence is Large ribosomal subunit protein bL28 (78 aa).

Positions Met1–His20 are disordered.

It belongs to the bacterial ribosomal protein bL28 family.

In Photobacterium profundum (strain SS9), this protein is Large ribosomal subunit protein bL28.